A 37-amino-acid chain; its full sequence is Large ribosomal subunit protein bL36 (37 aa).

The protein belongs to the bacterial ribosomal protein bL36 family.

This chain is Large ribosomal subunit protein bL36, found in Synechococcus sp. (strain RCC307).